The following is a 165-amino-acid chain: Phosphopantetheine adenylyltransferase (165 aa).

T9 serves as a coordination point for substrate. ATP is bound by residues 9-10 (TF) and H17. The substrate site is built by K41, L73, and R87. ATP is bound by residues 88 to 90 (GLR), E98, and 123 to 129 (LQPIASR).

This sequence belongs to the bacterial CoaD family. Homohexamer. It depends on Mg(2+) as a cofactor.

It is found in the cytoplasm. It carries out the reaction (R)-4'-phosphopantetheine + ATP + H(+) = 3'-dephospho-CoA + diphosphate. The protein operates within cofactor biosynthesis; coenzyme A biosynthesis; CoA from (R)-pantothenate: step 4/5. Its function is as follows. Reversibly transfers an adenylyl group from ATP to 4'-phosphopantetheine, yielding dephospho-CoA (dPCoA) and pyrophosphate. In Rhizorhabdus wittichii (strain DSM 6014 / CCUG 31198 / JCM 15750 / NBRC 105917 / EY 4224 / RW1) (Sphingomonas wittichii), this protein is Phosphopantetheine adenylyltransferase.